The chain runs to 220 residues: Probable cytidylate kinase (220 aa).

10–18 (GPAASGKSS) is an ATP binding site.

The protein belongs to the cytidylate kinase family. Type 1 subfamily.

The catalysed reaction is CMP + ATP = CDP + ADP. The enzyme catalyses dCMP + ATP = dCDP + ADP. The chain is Probable cytidylate kinase from Encephalitozoon cuniculi (strain GB-M1) (Microsporidian parasite).